The sequence spans 228 residues: Orotidine 5'-phosphate decarboxylase (228 aa).

Residues Asp11, Lys33, 60–69 (DLKLHDIPNT), Thr117, Arg178, Gln186, Gly206, and Arg207 contribute to the substrate site. Residue Lys62 is the Proton donor of the active site.

Belongs to the OMP decarboxylase family. Type 1 subfamily. Homodimer.

It catalyses the reaction orotidine 5'-phosphate + H(+) = UMP + CO2. The protein operates within pyrimidine metabolism; UMP biosynthesis via de novo pathway; UMP from orotate: step 2/2. Catalyzes the decarboxylation of orotidine 5'-monophosphate (OMP) to uridine 5'-monophosphate (UMP). The chain is Orotidine 5'-phosphate decarboxylase from Ehrlichia canis (strain Jake).